The sequence spans 256 residues: Imidazole glycerol phosphate synthase subunit HisF (256 aa).

Residues Asp-12 and Asp-131 contribute to the active site.

This sequence belongs to the HisA/HisF family. As to quaternary structure, heterodimer of HisH and HisF.

The protein resides in the cytoplasm. The catalysed reaction is 5-[(5-phospho-1-deoxy-D-ribulos-1-ylimino)methylamino]-1-(5-phospho-beta-D-ribosyl)imidazole-4-carboxamide + L-glutamine = D-erythro-1-(imidazol-4-yl)glycerol 3-phosphate + 5-amino-1-(5-phospho-beta-D-ribosyl)imidazole-4-carboxamide + L-glutamate + H(+). It functions in the pathway amino-acid biosynthesis; L-histidine biosynthesis; L-histidine from 5-phospho-alpha-D-ribose 1-diphosphate: step 5/9. Functionally, IGPS catalyzes the conversion of PRFAR and glutamine to IGP, AICAR and glutamate. The HisF subunit catalyzes the cyclization activity that produces IGP and AICAR from PRFAR using the ammonia provided by the HisH subunit. The polypeptide is Imidazole glycerol phosphate synthase subunit HisF (Bifidobacterium longum (strain DJO10A)).